A 194-amino-acid polypeptide reads, in one-letter code: CD-NTase-associated protein 15 (194 aa).

Residues 1 to 73 (MRMWELLPSK…DYLKHKFCPD (73 aa)) are required for cell toxicity. 2 consecutive transmembrane segments (helical) span residues 15–35 (ISTIISIIVFLFFLEFLGQPV) and 43–63 (ITTITILAFIFGKYLWKYFYI).

It belongs to the CBASS Cap15 membrane effector family. In terms of assembly, the beta barrel domain oligomerizes; in the presence of cyclic nucleotides (probably 3',3'-cGAMP, but the cognate CD-NTase makes at least 4 other cyclic nucleotides) higher-level oligomers are detected.

The protein resides in the cell inner membrane. In terms of biological role, effector protein of a CBASS antivirus system. CBASS (cyclic oligonucleotide-based antiphage signaling system) provides immunity against bacteriophages. The CD-NTase protein (CdnB) synthesizes cyclic nucleotides in response to infection; these serve as specific second messenger signals. The signals activate a diverse range of effectors, leading to bacterial cell death and thus abortive phage infection. Causes cell death in response to 3',3'-cGAMP upon coexpression in E.coli with V.cholerae DncV; inactivating DncV prevents cell death. Upon induction in E.coli with non-cognate DncV, the cell inner membrane shrinks and separates from the cell wall with a concomitant increase in the periplasm. Binds cyclic nucleotide second messenger 3',3'-cGAMP, probably oligomerizing, and induces cell membrane shrinkage and rupture, leading to cell death. A type I CBASS system. Its function is as follows. Protects E.coli against phage infection. When the CBASS operon (cdnB-cap15) is introduced in E.coli MG1655 there is about 100-fold protection against phage T2 and about 10-fold protection against phage T5 and T6. This Escherichia albertii protein is CD-NTase-associated protein 15.